Here is a 211-residue protein sequence, read N- to C-terminus: Phosphoglycerate mutase (211 aa).

Substrate is bound by residues 14 to 21 (RHGESEWN) and 27 to 28 (TG). His-15 functions as the Tele-phosphohistidine intermediate in the catalytic mechanism. Phosphothreonine is present on Thr-37. Ser-62 bears the Phosphoserine mark. Substrate-binding positions include Arg-66, 93 to 96 (ERYY), Lys-104, 120 to 121 (RR), and 164 to 165 (GN). Catalysis depends on Glu-93, which acts as the Proton donor/acceptor. Position 96 is a phosphotyrosine (Tyr-96). Residue Ser-166 is modified to Phosphoserine.

Belongs to the phosphoglycerate mutase family. BPG-dependent PGAM subfamily. In terms of assembly, monomer. In terms of processing, the N-terminus is blocked.

It carries out the reaction (2R)-2-phosphoglycerate = (2R)-3-phosphoglycerate. It participates in carbohydrate degradation; glycolysis; pyruvate from D-glyceraldehyde 3-phosphate: step 3/5. This is Phosphoglycerate mutase (gpm1) from Schizosaccharomyces pombe (strain 972 / ATCC 24843) (Fission yeast).